A 543-amino-acid chain; its full sequence is Limonene hydroxylase (543 aa).

Positions 232–464 constitute a Sigma-54 factor interaction domain; the sequence is VVTYNPSFEK…LRNVIERAFL (233 aa). Residues 260–267 and 324–333 each bind ATP; these read GETGSGKE and ADGGTLFLDE.

The enzyme catalyses (4S)-limonene + reduced [NADPH--hemoprotein reductase] + O2 = (1S,5R)-carveol + oxidized [NADPH--hemoprotein reductase] + H2O + H(+). The catalysed reaction is (4S)-limonene + reduced [NADPH--hemoprotein reductase] + O2 = (4S)-perillyl alcohol + oxidized [NADPH--hemoprotein reductase] + H2O + H(+). It catalyses the reaction perillyl alcohol + NAD(+) = perillyl aldehyde + NADH + H(+). It carries out the reaction (1S,5R)-carveol + NADP(+) = (R)-carvone + NADPH + H(+). Functionally, involved in limonene hydroxylation to a mixture of carveol and perillyl alcohol as well as in dehydrogenation of these products to carvone and perillyl aldehyde. Aromatic alcohols containing an isopropyl or isopropenyl group at ring position 4 also served as substrates for the dehydrogenase activity. This Geobacillus stearothermophilus (Bacillus stearothermophilus) protein is Limonene hydroxylase.